The sequence spans 485 residues: GTPase Der (485 aa).

2 consecutive EngA-type G domains span residues 3 to 167 (PTIA…PEPE) and 176 to 349 (PVFA…NAAM). Residues 9-16 (GRPNVGKS), 56-60 (DTGGF), 119-122 (NKGE), 182-189 (GRPNVGKS), 229-233 (DTAGV), and 294-297 (NKWD) contribute to the GTP site. The 85-residue stretch at 350–434 (IKMPTPKITR…PLRIQYNVSE (85 aa)) folds into the KH-like domain. The disordered stretch occupies residues 435–485 (NPYENAEDKPKKKPLRRVSLSNRIEKREGRKEEKNRFKKKTKVSVKKQFSK). A compositionally biased stretch (basic and acidic residues) spans 457 to 469 (RIEKREGRKEEKN). Residues 470–485 (RFKKKTKVSVKKQFSK) are compositionally biased toward basic residues.

The protein belongs to the TRAFAC class TrmE-Era-EngA-EngB-Septin-like GTPase superfamily. EngA (Der) GTPase family. As to quaternary structure, associates with the 50S ribosomal subunit.

Functionally, GTPase that plays an essential role in the late steps of ribosome biogenesis. This chain is GTPase Der, found in Neisseria meningitidis serogroup B (strain ATCC BAA-335 / MC58).